The sequence spans 237 residues: 7-cyano-7-deazaguanine synthase (237 aa).

Tyrosine 9–leucine 19 is a binding site for ATP. 4 residues coordinate Zn(2+): cysteine 189, cysteine 199, cysteine 202, and cysteine 205.

This sequence belongs to the QueC family. The cofactor is Zn(2+).

It catalyses the reaction 7-carboxy-7-deazaguanine + NH4(+) + ATP = 7-cyano-7-deazaguanine + ADP + phosphate + H2O + H(+). Its pathway is purine metabolism; 7-cyano-7-deazaguanine biosynthesis. Catalyzes the ATP-dependent conversion of 7-carboxy-7-deazaguanine (CDG) to 7-cyano-7-deazaguanine (preQ(0)). In Geobacter sulfurreducens (strain ATCC 51573 / DSM 12127 / PCA), this protein is 7-cyano-7-deazaguanine synthase.